We begin with the raw amino-acid sequence, 210 residues long: Proteasome subunit beta (210 aa).

A propeptide spans methionine 1–glycine 9 (removed in mature form; by autocatalysis). Catalysis depends on threonine 10, which acts as the Nucleophile.

The protein belongs to the peptidase T1B family. As to quaternary structure, the 20S proteasome core is composed of 14 alpha and 14 beta subunits that assemble into four stacked heptameric rings, resulting in a barrel-shaped structure. The two inner rings, each composed of seven catalytic beta subunits, are sandwiched by two outer rings, each composed of seven alpha subunits. The catalytic chamber with the active sites is on the inside of the barrel. Has a gated structure, the ends of the cylinder being occluded by the N-termini of the alpha-subunits. Is capped at one or both ends by the proteasome regulatory ATPase, PAN.

Its subcellular location is the cytoplasm. It catalyses the reaction Cleavage of peptide bonds with very broad specificity.. Its activity is regulated as follows. The formation of the proteasomal ATPase PAN-20S proteasome complex, via the docking of the C-termini of PAN into the intersubunit pockets in the alpha-rings, triggers opening of the gate for substrate entry. Interconversion between the open-gate and close-gate conformations leads to a dynamic regulation of the 20S proteasome proteolysis activity. Its function is as follows. Component of the proteasome core, a large protease complex with broad specificity involved in protein degradation. This Ferroglobus placidus (strain DSM 10642 / AEDII12DO) protein is Proteasome subunit beta.